The primary structure comprises 480 residues: Peptidase S41 family protein ustP (480 aa).

A disordered region spans residues 78 to 97; sequence CMPNKKSRPPDPRPSLAVGK. Residues 134-336 form a peptidase S41 domain region; sequence DVAVLQLPTF…LKQQGVRSIV (203 aa).

It belongs to the peptidase S41A family.

The protein operates within mycotoxin biosynthesis. Functionally, peptidase S41 family protein; part of the gene cluster that mediates the biosynthesis of the secondary metabolite ustiloxin B, an antimitotic tetrapeptide. First, ustA is processed by the subtilisin-like endoprotease Kex2 that is outside the ustiloxin B gene cluster, at the C-terminal side of Arg-Lys, after transfer to Golgi apparatus through the endoplasmic reticulum (ER). Cleavage by KEX2 generates 16 peptides YAIG-I to YAIG-XVI. To process the precursor peptide further, at least two peptidases are necessary to cleave the N-terminal and C-terminal sides of the Tyr-Ala-Ile-Gly core peptide which serves as backbone for the synthesis of ustiloxin B, through cyclization and modification of the tyrosine with a non-protein coding amino acid, norvaline. One of the two peptidases must be the serine peptidase ustP; and the other pepdidase is probably ustH. Macrocyclization of the core peptide derived from ustA requires the tyrosinase ustQ, as well as the homologous oxidases ustYa and ustYb, and leads to the production of the first cyclization product N-desmethylustiloxin F. For the formation of N-desmethylustiloxin F, three oxidation steps are required, hydroxylation at the benzylic position, hydroxylation at either the aromatic ring of Tyr or beta-position of Ile, and oxidative cyclization. UstQ may catalyze the oxidation of a phenol moiety, whereas the ustYa and ustYb are most likely responsible for the remaining two-step oxidations. N-desmethylustiloxin F is then methylated by ustM to yield ustiloxin F which in turn substrate of the cytochrome P450 monooxygenase ustC which catalyzes the formation of S-deoxyustiloxin H. The flavoprotein monooxygenases ustF1 and ustF2 then participate in the modification of the side chain of S-deoxyustiloxin H, leading to the synthesis of an oxime intermediate, via ustiloxin H. Finally, carboxylative dehydration performed by the cysteine desulfurase-like protein ustD yields ustiloxin B. This is Peptidase S41 family protein ustP from Aspergillus flavus (strain ATCC 200026 / FGSC A1120 / IAM 13836 / NRRL 3357 / JCM 12722 / SRRC 167).